A 655-amino-acid chain; its full sequence is Putative esterase (655 aa).

Residues 9–29 (VLSLTLIYISISIGFSVYFYV) form a helical membrane-spanning segment. Asn-71, Asn-89, Asn-101, Asn-185, Asn-386, Asn-449, and Asn-512 each carry an N-linked (GlcNAc...) asparagine; by host glycan. The Charge relay system role is filled by His-515. N-linked (GlcNAc...) asparagine; by host glycans are attached at residues Asn-527 and Asn-597.

This sequence belongs to the type-B carboxylesterase/lipase family.

The protein resides in the membrane. It carries out the reaction a carboxylic ester + H2O = an alcohol + a carboxylate + H(+). This Noctuidae (owlet moths) protein is Putative esterase.